The chain runs to 272 residues: HMP-PP phosphatase (272 aa).

Asp-8 functions as the Nucleophile in the catalytic mechanism. The Mg(2+) site is built by Asp-8, Asp-10, and Asp-212.

Belongs to the HAD-like hydrolase superfamily. Cof family. Mg(2+) serves as cofactor.

It carries out the reaction 4-amino-2-methyl-5-(diphosphooxymethyl)pyrimidine + H2O = 4-amino-2-methyl-5-(phosphooxymethyl)pyrimidine + phosphate + H(+). Its function is as follows. Catalyzes the hydrolysis of 4-amino-2-methyl-5-hydroxymethylpyrimidine pyrophosphate (HMP-PP) to 4-amino-2-methyl-5-hydroxymethylpyrimidine phosphate (HMP-P). This is HMP-PP phosphatase from Escherichia coli O157:H7.